A 410-amino-acid chain; its full sequence is Protein TIC 214 (410 aa).

Helical transmembrane passes span 22-42 (FVFG…GSFI), 61-81 (GSAI…IGVI), 87-107 (LEPS…IGFL), 131-151 (AVIV…ITSI), 161-181 (LFLF…GFLI), and 210-230 (LALC…YIGL).

The protein belongs to the TIC214 family. Part of the Tic complex.

Its subcellular location is the plastid. The protein resides in the chloroplast inner membrane. Its function is as follows. Involved in protein precursor import into chloroplasts. May be part of an intermediate translocation complex acting as a protein-conducting channel at the inner envelope. This chain is Protein TIC 214, found in Mesostigma viride (Green alga).